We begin with the raw amino-acid sequence, 200 residues long: Small ribosomal subunit protein uS5 (200 aa).

A compositionally biased stretch (polar residues) spans 1 to 12 (MGRPRTSQTRGQ). The tract at residues 1 to 49 (MGRPRTSQTRGQGPSGATGGNPRGGGSTTRERDARGARPGERDGGSEIQ) is disordered. Residues 13–27 (GPSGATGGNPRGGGS) show a composition bias toward gly residues. Positions 29–49 (TRERDARGARPGERDGGSEIQ) are enriched in basic and acidic residues. Positions 48-111 (IQDRVVQIRR…EKARHAMFDV (64 aa)) constitute an S5 DRBM domain.

It belongs to the universal ribosomal protein uS5 family. In terms of assembly, part of the 30S ribosomal subunit. Contacts proteins S4 and S8.

Its function is as follows. With S4 and S12 plays an important role in translational accuracy. Located at the back of the 30S subunit body where it stabilizes the conformation of the head with respect to the body. This chain is Small ribosomal subunit protein uS5, found in Rubrobacter xylanophilus (strain DSM 9941 / JCM 11954 / NBRC 16129 / PRD-1).